The sequence spans 340 residues: tRNA N6-adenosine threonylcarbamoyltransferase (340 aa).

Residues H115 and H119 each coordinate Fe cation. Substrate-binding positions include 137–141 (IVSGG), D170, G183, D187, and N276. Fe cation is bound at residue D304.

Belongs to the KAE1 / TsaD family. Fe(2+) is required as a cofactor.

The protein resides in the cytoplasm. It catalyses the reaction L-threonylcarbamoyladenylate + adenosine(37) in tRNA = N(6)-L-threonylcarbamoyladenosine(37) in tRNA + AMP + H(+). In terms of biological role, required for the formation of a threonylcarbamoyl group on adenosine at position 37 (t(6)A37) in tRNAs that read codons beginning with adenine. Is involved in the transfer of the threonylcarbamoyl moiety of threonylcarbamoyl-AMP (TC-AMP) to the N6 group of A37, together with TsaE and TsaB. TsaD likely plays a direct catalytic role in this reaction. The sequence is that of tRNA N6-adenosine threonylcarbamoyltransferase from Staphylococcus epidermidis (strain ATCC 35984 / DSM 28319 / BCRC 17069 / CCUG 31568 / BM 3577 / RP62A).